A 346-amino-acid chain; its full sequence is DNA primase small subunit PriS (346 aa).

Residues Asp97, Asp99, and Asp278 contribute to the active site.

The protein belongs to the eukaryotic-type primase small subunit family. In terms of assembly, heterodimer of a small subunit (PriS) and a large subunit (PriL). Mg(2+) is required as a cofactor. It depends on Mn(2+) as a cofactor.

Catalytic subunit of DNA primase, an RNA polymerase that catalyzes the synthesis of short RNA molecules used as primers for DNA polymerase during DNA replication. The small subunit contains the primase catalytic core and has DNA synthesis activity on its own. Binding to the large subunit stabilizes and modulates the activity, increasing the rate of DNA synthesis while decreasing the length of the DNA fragments, and conferring RNA synthesis capability. The DNA polymerase activity may enable DNA primase to also catalyze primer extension after primer synthesis. May also play a role in DNA repair. The sequence is that of DNA primase small subunit PriS from Thermococcus onnurineus (strain NA1).